We begin with the raw amino-acid sequence, 326 residues long: Peroxidase 1 (326 aa).

The N-terminal stretch at 1-22 is a signal peptide; the sequence is MASSRVILALLLAAAAVMASSA. Q23 is modified (pyrrolidone carboxylic acid). 4 disulfides stabilise this stretch: C33-C112, C66-C71, C118-C322, and C196-C231. H64 acts as the Proton acceptor in catalysis. Positions 65, 68, 70, 72, and 74 each coordinate Ca(2+). N82 and N153 each carry an N-linked (GlcNAc...) asparagine glycan. Position 159 (P159) interacts with substrate. A glycan (N-linked (GlcNAc...) asparagine) is linked at N164. H189 lines the heme b pocket. T190 serves as a coordination point for Ca(2+). Residues N205 and N237 are each glycosylated (N-linked (GlcNAc...) asparagine). D244, S247, and D252 together coordinate Ca(2+).

The protein belongs to the peroxidase family. Classical plant (class III) peroxidase subfamily. Ca(2+) serves as cofactor. The cofactor is heme b.

It localises to the secreted. The catalysed reaction is 2 a phenolic donor + H2O2 = 2 a phenolic radical donor + 2 H2O. In terms of biological role, removal of H(2)O(2), oxidation of toxic reductants, biosynthesis and degradation of lignin, suberization, auxin catabolism, response to environmental stresses such as wounding, pathogen attack and oxidative stress. These functions might be dependent on each isozyme/isoform in each plant tissue. This Oryza sativa subsp. japonica (Rice) protein is Peroxidase 1 (PRX74).